A 26-amino-acid polypeptide reads, in one-letter code: uncharacterized protein (26 aa).

Over residues 1–16 (MPEQKANCSPNGNITV) the composition is skewed to polar residues. Residues 1–26 (MPEQKANCSPNGNITVDSMIMSLGSS) are disordered.

This is an uncharacterized protein from Saccharomyces cerevisiae (strain ATCC 204508 / S288c) (Baker's yeast).